Here is a 360-residue protein sequence, read N- to C-terminus: Membrane-bound lytic murein transglycosylase C (360 aa).

The first 16 residues, 1–16, serve as a signal peptide directing secretion; it reads MKKIFALALIAPLLIS. Residue cysteine 17 is the site of N-palmitoyl cysteine attachment. Cysteine 17 carries S-diacylglycerol cysteine lipidation.

This sequence belongs to the transglycosylase Slt family.

The protein resides in the cell outer membrane. It catalyses the reaction Exolytic cleavage of the (1-&gt;4)-beta-glycosidic linkage between N-acetylmuramic acid (MurNAc) and N-acetylglucosamine (GlcNAc) residues in peptidoglycan, from either the reducing or the non-reducing ends of the peptidoglycan chains, with concomitant formation of a 1,6-anhydrobond in the MurNAc residue.. Its function is as follows. Murein-degrading enzyme. May play a role in recycling of muropeptides during cell elongation and/or cell division. The sequence is that of Membrane-bound lytic murein transglycosylase C from Cronobacter sakazakii (strain ATCC BAA-894) (Enterobacter sakazakii).